A 560-amino-acid chain; its full sequence is Alpha-farnesene synthase (560 aa).

3 residues coordinate Mg(2+): D308, D312, and E462. Positions 308-312 match the DDXXD motif motif; it reads DDIYD.

Belongs to the terpene synthase family. Tpsa subfamily. It depends on Mg(2+) as a cofactor. Expressed in the rind tissues of ripe fruits.

It is found in the cytoplasm. The catalysed reaction is (2E,6E)-farnesyl diphosphate = (3E,6E)-alpha-farnesene + diphosphate. The protein operates within secondary metabolite biosynthesis; terpenoid biosynthesis. Functionally, sesquiterpene synthase producing exclusively alpha-farnesene. Associated with the production of sesquiterpenes responsible for the aroma of the fruit. This is Alpha-farnesene synthase from Cucumis melo (Muskmelon).